The primary structure comprises 160 residues: Small ribosomal subunit protein uS7 (160 aa).

The protein belongs to the universal ribosomal protein uS7 family. In terms of assembly, part of the 30S ribosomal subunit. Contacts proteins S9 and S11.

In terms of biological role, one of the primary rRNA binding proteins, it binds directly to 16S rRNA where it nucleates assembly of the head domain of the 30S subunit. Is located at the subunit interface close to the decoding center, probably blocks exit of the E-site tRNA. The protein is Small ribosomal subunit protein uS7 of Rickettsia typhi (strain ATCC VR-144 / Wilmington).